The chain runs to 337 residues: Ketol-acid reductoisomerase (NADP(+)) (337 aa).

A KARI N-terminal Rossmann domain is found at 3–183; that stretch reads VEVFYDDDAD…GGTRAGAIRT (181 aa). Residues 26 to 29, Ser52, Ser54, and 84 to 87 each bind NADP(+); these read YGSQ and DTAQ. His109 is a catalytic residue. Gly135 lines the NADP(+) pocket. Residues 184–329 enclose the KARI C-terminal knotted domain; sequence TFTEETETDL…SKLRGMMSWV (146 aa). Mg(2+) is bound by residues Asp192, Glu196, Glu228, and Glu232. Ser253 contributes to the substrate binding site.

It belongs to the ketol-acid reductoisomerase family. It depends on Mg(2+) as a cofactor.

It catalyses the reaction (2R)-2,3-dihydroxy-3-methylbutanoate + NADP(+) = (2S)-2-acetolactate + NADPH + H(+). It carries out the reaction (2R,3R)-2,3-dihydroxy-3-methylpentanoate + NADP(+) = (S)-2-ethyl-2-hydroxy-3-oxobutanoate + NADPH + H(+). Its pathway is amino-acid biosynthesis; L-isoleucine biosynthesis; L-isoleucine from 2-oxobutanoate: step 2/4. It participates in amino-acid biosynthesis; L-valine biosynthesis; L-valine from pyruvate: step 2/4. Involved in the biosynthesis of branched-chain amino acids (BCAA). Catalyzes an alkyl-migration followed by a ketol-acid reduction of (S)-2-acetolactate (S2AL) to yield (R)-2,3-dihydroxy-isovalerate. In the isomerase reaction, S2AL is rearranged via a Mg-dependent methyl migration to produce 3-hydroxy-3-methyl-2-ketobutyrate (HMKB). In the reductase reaction, this 2-ketoacid undergoes a metal-dependent reduction by NADPH to yield (R)-2,3-dihydroxy-isovalerate. The chain is Ketol-acid reductoisomerase (NADP(+)) from Salinispora arenicola (strain CNS-205).